Consider the following 317-residue polypeptide: OVARIAN TUMOR DOMAIN-containing deubiquitinating enzyme 4 (317 aa).

The 139-residue stretch at 168 to 306 (YSIIGIPGDG…FGHYDALLLH (139 aa)) folds into the OTU domain. Residue Asp176 is part of the active site. Cys179 acts as the Nucleophile in catalysis. His299 is a catalytic residue.

This sequence belongs to the peptidase C65 family.

The protein localises to the cytoplasm. The catalysed reaction is Thiol-dependent hydrolysis of ester, thioester, amide, peptide and isopeptide bonds formed by the C-terminal Gly of ubiquitin (a 76-residue protein attached to proteins as an intracellular targeting signal).. Its function is as follows. Hydrolase that can remove conjugated ubiquitin from proteins in vitro and may therefore play an important regulatory role at the level of protein turnover by preventing degradation. Cysteine protease with a preference for 'Lys-63' over 'Lys-48'-linked over 'Met-1' ubiquitin (UB) tetramers (e.g. Ub3 and Ub4) as substrates. Also cleaves RUB-GST fusion. The polypeptide is OVARIAN TUMOR DOMAIN-containing deubiquitinating enzyme 4 (Arabidopsis thaliana (Mouse-ear cress)).